Here is a 454-residue protein sequence, read N- to C-terminus: Chromosomal replication initiator protein DnaA (454 aa).

The domain I, interacts with DnaA modulators stretch occupies residues 1-79 (MSLCLWKQCL…NSPFIKFKVY (79 aa)). The interval 79 to 117 (YQTSKEKKFKKNILQKIQNLNAKPIWDKIPIFKKSSHRS) is domain II. Positions 118-334 (NINKKHSFEN…GALNRVIVNA (217 aa)) are domain III, AAA+ region. Residues G162, G164, K165, and T166 each coordinate ATP. The tract at residues 335–454 (NFTHRSITVE…FSNLIRTLSV (120 aa)) is domain IV, binds dsDNA.

The protein belongs to the DnaA family. As to quaternary structure, oligomerizes as a right-handed, spiral filament on DNA at oriC.

It is found in the cytoplasm. In terms of biological role, plays an essential role in the initiation and regulation of chromosomal replication. ATP-DnaA binds to the origin of replication (oriC) to initiate formation of the DNA replication initiation complex once per cell cycle. Binds the DnaA box (a 9 base pair repeat at the origin) and separates the double-stranded (ds)DNA. Forms a right-handed helical filament on oriC DNA; dsDNA binds to the exterior of the filament while single-stranded (ss)DNA is stabiized in the filament's interior. The ATP-DnaA-oriC complex binds and stabilizes one strand of the AT-rich DNA unwinding element (DUE), permitting loading of DNA polymerase. After initiation quickly degrades to an ADP-DnaA complex that is not apt for DNA replication. Binds acidic phospholipids. This chain is Chromosomal replication initiator protein DnaA, found in Buchnera aphidicola subsp. Schizaphis graminum (strain Sg).